The sequence spans 1248 residues: Apoptotic protease-activating factor 1 (1248 aa).

Residues M1–G90 form the CARD domain. An NB-ARC domain is found at S104–L415. ATP contacts are provided by residues G154–S161 and R265. One copy of the WD 1-1 repeat lies at P613–E652. The stretch at A655–T694 is one WD 1-2 repeat. The WD 1-3 repeat unit spans residues E697–T738. One copy of the WD 1-4 repeat lies at G741–S780. The WD 1-5 repeat unit spans residues D796–H836. Residues G838 to D877 form a WD 1-6 repeat. The WD 1-7 repeat unit spans residues G880 to E910. An interpropeller linker region spans residues E910–M921. One copy of the WD 2-1 repeat lies at L922 to Y958. Residues L959–S998 form a WD 2-2 repeat. One copy of the WD 2-3 repeat lies at Q1001–L1040. The stretch at G1042 to D1080 is one WD 2-4 repeat. One copy of the WD 2-5 repeat lies at C1083–E1122. The WD 2-6 repeat unit spans residues G1125–L1164. The WD 2-7 repeat unit spans residues T1175–T1212. The WD 2-8 repeat unit spans residues F1213–E1248.

Monomer. Oligomerizes to a heptameric ring, known as the apoptosome, upon binding of cytochrome c and dATP. Oligomeric Apaf-1 and pro-caspase-9 bind to each other via their respective NH2-terminal CARD domains and consecutively mature caspase-9 is released from the complex. Pro-caspase-3 is recruited into the Apaf-1-pro-caspase-9 complex via interaction with pro-caspase-9. Interacts with APIP. Interacts (via CARD and NACHT domains) with NAIP/BIRC1 (via NACHT domain). Interacts with CIAO2A. In terms of tissue distribution, ubiquitous. Highest levels of expression in adult spleen and peripheral blood leukocytes, and in fetal brain, kidney and lung. Isoform 1 is expressed in heart, kidney and liver.

The protein localises to the cytoplasm. Its function is as follows. Oligomeric Apaf-1 mediates the cytochrome c-dependent autocatalytic activation of pro-caspase-9 (Apaf-3), leading to the activation of caspase-3 and apoptosis. This activation requires ATP. Isoform 6 is less effective in inducing apoptosis. In Homo sapiens (Human), this protein is Apoptotic protease-activating factor 1.